An 835-amino-acid chain; its full sequence is Leucine--tRNA ligase (835 aa).

Positions P44–H54 match the 'HIGH' region motif. The 'KMSKS' region motif lies at K587–S591. An ATP-binding site is contributed by K590.

It belongs to the class-I aminoacyl-tRNA synthetase family.

The protein localises to the cytoplasm. It carries out the reaction tRNA(Leu) + L-leucine + ATP = L-leucyl-tRNA(Leu) + AMP + diphosphate. This is Leucine--tRNA ligase from Lawsonia intracellularis (strain PHE/MN1-00).